Here is a 101-residue protein sequence, read N- to C-terminus: Large ribosomal subunit protein bL21 (101 aa).

This sequence belongs to the bacterial ribosomal protein bL21 family. Part of the 50S ribosomal subunit. Contacts protein L20.

Functionally, this protein binds to 23S rRNA in the presence of protein L20. This chain is Large ribosomal subunit protein bL21, found in Micrococcus luteus (strain ATCC 4698 / DSM 20030 / JCM 1464 / CCM 169 / CCUG 5858 / IAM 1056 / NBRC 3333 / NCIMB 9278 / NCTC 2665 / VKM Ac-2230) (Micrococcus lysodeikticus).